Here is a 222-residue protein sequence, read N- to C-terminus: Phosphatidylinositol phosphate synthase (222 aa).

31-34 (DIVT) contributes to the a CDP-1,2-diacyl-sn-glycerol binding site. A run of 2 helical transmembrane segments spans residues 32–49 (IVTL…LTLF) and 55–74 (WWGA…DGAM). Mg(2+)-binding residues include Asp68 and Asp71. Positions 72, 76, and 82 each coordinate a CDP-1,2-diacyl-sn-glycerol. 2 residues coordinate Mg(2+): Asp89 and Asp93. The active-site Proton acceptor is the Asp93. Helical transmembrane passes span 95–112 (LGDG…AFGL), 118–136 (VVAT…YIKA), 156–173 (LVIV…FFPL), and 179–196 (VAMW…LQRV).

It belongs to the CDP-alcohol phosphatidyltransferase class-I family. Homodimer. It depends on Mg(2+) as a cofactor.

The protein resides in the cell membrane. Its subcellular location is the secreted. It localises to the cell wall. It catalyses the reaction a CDP-1,2-diacyl-sn-glycerol + 1D-myo-inositol 3-phosphate = a 1,2-diacyl-sn-glycero-3-phospho-(1D-myo-inositol-3-phosphate) + CMP + H(+). It carries out the reaction 1,2-di-(9Z-octadecenoyl)-sn-glycero-3-cytidine-5'-diphosphate + 1D-myo-inositol 3-phosphate = 1,2-di-(9Z-octadecenoyl)-sn-glycero-3-phospho-(1D-myo-inositol-3-phosphate) + CMP + H(+). The catalysed reaction is 1,2-dihexadecanoyl-sn-glycero-3-CDP + 1D-myo-inositol 3-phosphate = 1,2-dihexadecanoyl-sn-glycero-3-phospho-(1D-myo-inositol-3-phosphate) + CMP + H(+). The protein operates within phospholipid metabolism; phosphatidylinositol phosphate biosynthesis. Its activity is regulated as follows. Competitively inhibited by several inositol 1-phosphate analogs, including the phosphonate analog 1-deoxy-1-phosphonomethyl-myo-inositol (Ino-C-P). This leads to inhibition of M.smegmatis growth. Functionally, catalyzes the conjugation of the 1'-hydroxyl group of D-myo-inositol-3-phosphate (also named L-myo-inositol-1-phosphate) with a lipid tail of cytidine diphosphate diacylglycerol (CDP-DAG), forming phosphatidylinositol phosphate (PIP) and CMP. PIP is a precursor of phosphatidylinositol (PI) which is an essential lipid for mycobacteria required for formation of their cell wall. Is essential to the survival of M.smegmatis. This Mycolicibacterium smegmatis (strain ATCC 700084 / mc(2)155) (Mycobacterium smegmatis) protein is Phosphatidylinositol phosphate synthase.